A 504-amino-acid chain; its full sequence is Procardosin-A (504 aa).

Positions 1–24 are cleaved as a signal peptide; sequence MGTSIKANVLALFLFYLLSPTVFS. The propeptide occupies 25–68; sequence VSDDGLIRIGLKKRKVDRIDQLRGRRALMEGNARKDFGFRGTVR. One can recognise a Peptidase A1 domain in the interval 85–501; the sequence is YFGEIGIGTP…DYGNLLVGFA (417 aa). The active site involves Asp103. Cysteines 116 and 122 form a disulfide. Asn139 carries N-linked (GlcNAc...) asparagine glycosylation. An RGD motif motif is present at residues 246–248; it reads RGD. A disulfide bridge links Cys277 with Cys281. Asp286 is an active-site residue. Positions 310-414 are cleaved as a propeptide — plant-specific insert; the sequence is GVMNQQCKTV…YANELCEHLS (105 aa). Residues 311–416 enclose the Saposin B-type domain; sequence VMNQQCKTVV…NELCEHLSTS (106 aa). 4 disulfides stabilise this stretch: Cys316-Cys410, Cys341-Cys382, Cys347-Cys379, and Cys424-Cys461. N-linked (GlcNAc...) asparagine glycosylation is present at Asn432. The KGE motif motif lies at 455 to 457; that stretch reads KGE.

Belongs to the peptidase A1 family. Heterodimer of a light chain and a heavy chain. An intermediate form (35 kDa and 30 kDa subunits) is produced first, and undergoes proteolytic processing to remove the internal plant-specific insert (PSI) and the propeptide. There is some heterogeniety at the cleavage site. Interacts (via RGD or KGE motifs) with PLD1 (via C2 domain). In terms of processing, N-glycosylated. Glycans found at Asn-139 include approximately 6% oligomannose, 82% oligosaccharides of the plant modified type with proximal fucose but without xylose and 6% oligosaccharides of the plant modified type with proximal fucose and xylose. Glycans found at Asn-432 include 14% oligosaccharides of the plant modified type with proximal fucose but without xylose and 86% oligosaccharides of the plant modified type with proximal fucose and xylose. In terms of tissue distribution, detected only in pistils, not in seeds, roots, midribs, bracts, stamens, pollen, vascular or supporting tissues. Detected in seeds. High amounts are detected in the broad outer region of the upper portion of the stigma, towards the lower portion of the stigma it accumulates at the periphery. Within the stigma, expressed mainly in the epidermic papillae, lower levels are found in the cortical parenchyma. Present mainly in epidermal cells within the stye (at protein level). Expressed in young flower buds, and at lower levels in seeds, pollen and bracteas, but not in roots or leaves.

It localises to the microsome membrane. Its subcellular location is the protein storage vacuole. The protein resides in the secreted. It is found in the cell wall. The protein localises to the extracellular space. It localises to the extracellular matrix. With respect to regulation, inhibited by the specific aspartic proteinase inhibitors diazoacetyl-noleucine methyl ester and pepstatin. In terms of biological role, aspartic proteinase with a high preference for bonds between hydrophobic residues. Cleaves alpha-lactalbumin but not beta-lactoglobulin. This Cynara cardunculus (Cardoon) protein is Procardosin-A.